A 315-amino-acid polypeptide reads, in one-letter code: Putative ankyrin repeat protein R600 (315 aa).

5 ANK repeats span residues 79-108 (NECRYFRMAVYNNSYDIAKYLLENGANVHV), 118-152 (SGFGKFYVFHSEKKEKRDTVELVKLLIDYNAMVGT), 153-182 (DTCNLVHTAIDANRLDVVKILVENGADIFS), 184-211 (QSKLLKSAVMYNYDILEYLISQGIDVTD), and 212-240 (DNNSVLKFAVSRGYDCVDLLLDAGADMNT).

This is Putative ankyrin repeat protein R600 from Acanthamoeba polyphaga mimivirus (APMV).